Consider the following 538-residue polypeptide: Chaperonin GroEL (538 aa).

Residues 30–33, 87–91, Gly415, 479–481, and Asp495 each bind ATP; these read TLGP, DGTTT, and DAA.

It belongs to the chaperonin (HSP60) family. As to quaternary structure, forms a cylinder of 14 subunits composed of two heptameric rings stacked back-to-back. Interacts with the co-chaperonin GroES.

It localises to the cytoplasm. The enzyme catalyses ATP + H2O + a folded polypeptide = ADP + phosphate + an unfolded polypeptide.. Functionally, together with its co-chaperonin GroES, plays an essential role in assisting protein folding. The GroEL-GroES system forms a nano-cage that allows encapsulation of the non-native substrate proteins and provides a physical environment optimized to promote and accelerate protein folding. In Dictyoglomus thermophilum (strain ATCC 35947 / DSM 3960 / H-6-12), this protein is Chaperonin GroEL.